A 254-amino-acid polypeptide reads, in one-letter code: Imidazole glycerol phosphate synthase subunit HisF (254 aa).

Catalysis depends on residues Asp-12 and Asp-131.

This sequence belongs to the HisA/HisF family. In terms of assembly, heterodimer of HisH and HisF.

It localises to the cytoplasm. The enzyme catalyses 5-[(5-phospho-1-deoxy-D-ribulos-1-ylimino)methylamino]-1-(5-phospho-beta-D-ribosyl)imidazole-4-carboxamide + L-glutamine = D-erythro-1-(imidazol-4-yl)glycerol 3-phosphate + 5-amino-1-(5-phospho-beta-D-ribosyl)imidazole-4-carboxamide + L-glutamate + H(+). It functions in the pathway amino-acid biosynthesis; L-histidine biosynthesis; L-histidine from 5-phospho-alpha-D-ribose 1-diphosphate: step 5/9. IGPS catalyzes the conversion of PRFAR and glutamine to IGP, AICAR and glutamate. The HisF subunit catalyzes the cyclization activity that produces IGP and AICAR from PRFAR using the ammonia provided by the HisH subunit. The sequence is that of Imidazole glycerol phosphate synthase subunit HisF from Leuconostoc mesenteroides subsp. mesenteroides (strain ATCC 8293 / DSM 20343 / BCRC 11652 / CCM 1803 / JCM 6124 / NCDO 523 / NBRC 100496 / NCIMB 8023 / NCTC 12954 / NRRL B-1118 / 37Y).